Here is a 140-residue protein sequence, read N- to C-terminus: ATP synthase epsilon chain (140 aa).

This sequence belongs to the ATPase epsilon chain family. As to quaternary structure, F-type ATPases have 2 components, CF(1) - the catalytic core - and CF(0) - the membrane proton channel. CF(1) has five subunits: alpha(3), beta(3), gamma(1), delta(1), epsilon(1). CF(0) has three main subunits: a, b and c.

It is found in the cell inner membrane. Its function is as follows. Produces ATP from ADP in the presence of a proton gradient across the membrane. The sequence is that of ATP synthase epsilon chain from Neisseria meningitidis serogroup C (strain 053442).